A 250-amino-acid chain; its full sequence is Thermostable monoacylglycerol lipase (250 aa).

Residue Phe-29 coordinates substrate. The active-site Nucleophile is Ser-97. Met-98 is a substrate binding site. Active-site charge relay system residues include Asp-196 and His-226.

Belongs to the lipase/esterase LIP3/BchO family. As to quaternary structure, monomer.

It carries out the reaction Hydrolyzes glycerol monoesters of long-chain fatty acids.. With respect to regulation, not inhibited by cholate, but slightly inhibited by triton X-100 and deoxycholate. Completely inhibited by PMSF (phenylmethylsulfonyl fluoride) at a concentration of 200 uM. Hydrolyzes monoacylglycerols, with the highest activity occurring with 1-monolauroylglycerol. The sequence is that of Thermostable monoacylglycerol lipase from Bacillus sp. (strain H-257).